The following is a 217-amino-acid chain: 3,4-dihydroxy-2-butanone 4-phosphate synthase (217 aa).

D-ribulose 5-phosphate contacts are provided by residues 37-38 (RE), aspartate 42, 150-154 (RGGHT), and glutamate 174. Glutamate 38 serves as a coordination point for Mg(2+). Histidine 153 contributes to the Mg(2+) binding site.

The protein belongs to the DHBP synthase family. Homodimer. Requires Mg(2+) as cofactor. Mn(2+) serves as cofactor.

It carries out the reaction D-ribulose 5-phosphate = (2S)-2-hydroxy-3-oxobutyl phosphate + formate + H(+). Its pathway is cofactor biosynthesis; riboflavin biosynthesis; 2-hydroxy-3-oxobutyl phosphate from D-ribulose 5-phosphate: step 1/1. Its function is as follows. Catalyzes the conversion of D-ribulose 5-phosphate to formate and 3,4-dihydroxy-2-butanone 4-phosphate. This chain is 3,4-dihydroxy-2-butanone 4-phosphate synthase, found in Cronobacter sakazakii (strain ATCC BAA-894) (Enterobacter sakazakii).